A 511-amino-acid polypeptide reads, in one-letter code: 2,3-bisphosphoglycerate-independent phosphoglycerate mutase (511 aa).

A Mn(2+)-binding site is contributed by Asp-12. A Phosphotyrosine modification is found at Tyr-36. Mn(2+) is bound at residue Ser-62. Residue Ser-62 is the Phosphoserine intermediate of the active site. Residues His-123, 153–154 (RD), Arg-185, Arg-191, 261–264 (RPDR), and Lys-336 each bind substrate. Mn(2+) contacts are provided by Asp-403, His-407, Asp-444, His-445, and His-462.

Belongs to the BPG-independent phosphoglycerate mutase family. Monomer. It depends on Mn(2+) as a cofactor.

The catalysed reaction is (2R)-2-phosphoglycerate = (2R)-3-phosphoglycerate. Its pathway is carbohydrate degradation; glycolysis; pyruvate from D-glyceraldehyde 3-phosphate: step 3/5. With respect to regulation, could be inhibited during sporulation by acidification of the forespore, thus allowing accumulation of the spore's large depot of 3-phosphoglyceric acid. Functionally, essential for rapid growth and for sporulation. Catalyzes the interconversion of 2-phosphoglycerate (2-PGA) and 3-phosphoglycerate (3-PGA). The sequence is that of 2,3-bisphosphoglycerate-independent phosphoglycerate mutase from Geobacillus stearothermophilus (Bacillus stearothermophilus).